Reading from the N-terminus, the 271-residue chain is Delta(7)-sterol-C5(6)-desaturase (271 aa).

Transmembrane regions (helical) follow at residues 44-64 (IGGV…IYHL) and 120-140 (VGWL…EFGI). In terms of domain architecture, Fatty acid hydroxylase spans 130–259 (AIYLVIVEFG…TIWMDWMFGT (130 aa)). A Histidine box-1 motif is present at residues 144–148 (HMELH). A Histidine box-2 motif is present at residues 158–162 (HATHH). A helical transmembrane segment spans residues 190–210 (HVVALLLVPMHFSTHIALIFL). A Histidine box-3 motif is present at residues 235–239 (HTIHH).

The protein belongs to the sterol desaturase family. The cofactor is Fe cation.

It localises to the endoplasmic reticulum membrane. The enzyme catalyses a Delta(7)-sterol + 2 Fe(II)-[cytochrome b5] + O2 + 2 H(+) = a Delta(5),Delta(7)-sterol + 2 Fe(III)-[cytochrome b5] + 2 H2O. Its function is as follows. Involved in the biosynthesis of sitosterol and campesterol. This Nicotiana tabacum (Common tobacco) protein is Delta(7)-sterol-C5(6)-desaturase.